A 234-amino-acid polypeptide reads, in one-letter code: Elongation factor Tu, chloroplastic (234 aa).

Residues 1-125 (KNMITGAAQM…KVDSYIPTPE (125 aa)) enclose the tr-type G domain. 47-50 (NKQD) contributes to the GTP binding site.

This sequence belongs to the TRAFAC class translation factor GTPase superfamily. Classic translation factor GTPase family. EF-Tu/EF-1A subfamily.

It is found in the plastid. It localises to the chloroplast. It catalyses the reaction GTP + H2O = GDP + phosphate + H(+). GTP hydrolase that promotes the GTP-dependent binding of aminoacyl-tRNA to the A-site of ribosomes during protein biosynthesis. The chain is Elongation factor Tu, chloroplastic (tufA) from Pandorina morum (Freshwater green alga).